A 351-amino-acid polypeptide reads, in one-letter code: Nicotinate-nucleotide--dimethylbenzimidazole phosphoribosyltransferase (351 aa).

The active-site Proton acceptor is glutamate 317.

This sequence belongs to the CobT family.

The enzyme catalyses 5,6-dimethylbenzimidazole + nicotinate beta-D-ribonucleotide = alpha-ribazole 5'-phosphate + nicotinate + H(+). The protein operates within nucleoside biosynthesis; alpha-ribazole biosynthesis; alpha-ribazole from 5,6-dimethylbenzimidazole: step 1/2. Its function is as follows. Catalyzes the synthesis of alpha-ribazole-5'-phosphate from nicotinate mononucleotide (NAMN) and 5,6-dimethylbenzimidazole (DMB). This is Nicotinate-nucleotide--dimethylbenzimidazole phosphoribosyltransferase from Pseudomonas fluorescens (strain ATCC BAA-477 / NRRL B-23932 / Pf-5).